The sequence spans 83 residues: RNA-binding protein Hfq (83 aa).

The Sm domain maps to 11–71 (DTFLNFVRKN…ISTIMPGQPI (61 aa)).

This sequence belongs to the Hfq family. As to quaternary structure, homohexamer.

RNA chaperone that binds small regulatory RNA (sRNAs) and mRNAs to facilitate mRNA translational regulation in response to envelope stress, environmental stress and changes in metabolite concentrations. Also binds with high specificity to tRNAs. In Methylocella silvestris (strain DSM 15510 / CIP 108128 / LMG 27833 / NCIMB 13906 / BL2), this protein is RNA-binding protein Hfq.